Here is a 97-residue protein sequence, read N- to C-terminus: uncharacterized protein (97 aa).

The first 21 residues, 1-21, serve as a signal peptide directing secretion; it reads MNKKFSISLLSTILAFLLVLG. Residue C22 is the site of N-palmitoyl cysteine attachment. A lipid anchor (S-diacylglycerol cysteine) is attached at C22.

It to B.burgdorferi BBD15.

The protein localises to the cell membrane. This is an uncharacterized protein from Borreliella burgdorferi (strain ATCC 35210 / DSM 4680 / CIP 102532 / B31) (Borrelia burgdorferi).